The sequence spans 104 residues: Pyrimidine/purine nucleoside phosphorylase (104 aa).

It belongs to the nucleoside phosphorylase PpnP family.

It carries out the reaction a purine D-ribonucleoside + phosphate = a purine nucleobase + alpha-D-ribose 1-phosphate. It catalyses the reaction adenosine + phosphate = alpha-D-ribose 1-phosphate + adenine. The catalysed reaction is cytidine + phosphate = cytosine + alpha-D-ribose 1-phosphate. The enzyme catalyses guanosine + phosphate = alpha-D-ribose 1-phosphate + guanine. It carries out the reaction inosine + phosphate = alpha-D-ribose 1-phosphate + hypoxanthine. It catalyses the reaction thymidine + phosphate = 2-deoxy-alpha-D-ribose 1-phosphate + thymine. The catalysed reaction is uridine + phosphate = alpha-D-ribose 1-phosphate + uracil. The enzyme catalyses xanthosine + phosphate = alpha-D-ribose 1-phosphate + xanthine. Functionally, catalyzes the phosphorolysis of diverse nucleosides, yielding D-ribose 1-phosphate and the respective free bases. Can use uridine, adenosine, guanosine, cytidine, thymidine, inosine and xanthosine as substrates. Also catalyzes the reverse reactions. This chain is Pyrimidine/purine nucleoside phosphorylase, found in Leptothrix cholodnii (strain ATCC 51168 / LMG 8142 / SP-6) (Leptothrix discophora (strain SP-6)).